The sequence spans 176 residues: Urease accessory protein UreE (176 aa).

The segment at A147–H176 is disordered.

Belongs to the UreE family.

It is found in the cytoplasm. Its function is as follows. Involved in urease metallocenter assembly. Binds nickel. Probably functions as a nickel donor during metallocenter assembly. This is Urease accessory protein UreE from Alcanivorax borkumensis (strain ATCC 700651 / DSM 11573 / NCIMB 13689 / SK2).